Reading from the N-terminus, the 55-residue chain is uncharacterized protein (55 aa).

Positions 1-30 (MDKPTVETSAAPVETLVLTEPPAETQAEDS) are disordered.

This is an uncharacterized protein from Frog virus 3 (isolate Goorha) (FV-3).